The sequence spans 490 residues: Cytochrome P450 2C25 (490 aa).

Cysteine 435 contributes to the heme binding site.

This sequence belongs to the cytochrome P450 family. The cofactor is heme.

The protein resides in the endoplasmic reticulum membrane. The protein localises to the microsome membrane. It carries out the reaction an organic molecule + reduced [NADPH--hemoprotein reductase] + O2 = an alcohol + oxidized [NADPH--hemoprotein reductase] + H2O + H(+). Functionally, catalyzes the hydroxylation of tolbutamide and the N-demethylation of aminopyrine and benzphetamine. Also has testosterone hydroxylase (16 beta) activity. This is Cytochrome P450 2C25 (CYP2C25) from Mesocricetus auratus (Golden hamster).